We begin with the raw amino-acid sequence, 200 residues long: Large ribosomal subunit protein bL25 (200 aa).

Belongs to the bacterial ribosomal protein bL25 family. CTC subfamily. In terms of assembly, part of the 50S ribosomal subunit; part of the 5S rRNA/L5/L18/L25 subcomplex. Contacts the 5S rRNA. Binds to the 5S rRNA independently of L5 and L18.

Its function is as follows. This is one of the proteins that binds to the 5S RNA in the ribosome where it forms part of the central protuberance. In Corynebacterium glutamicum (strain ATCC 13032 / DSM 20300 / JCM 1318 / BCRC 11384 / CCUG 27702 / LMG 3730 / NBRC 12168 / NCIMB 10025 / NRRL B-2784 / 534), this protein is Large ribosomal subunit protein bL25.